A 274-amino-acid chain; its full sequence is Caldesmon, smooth muscle (274 aa).

Disordered regions lie at residues Ser-1–Lys-102 and Lys-179–Pro-274. Composition is skewed to basic and acidic residues over residues Gly-12–Gln-21 and Asp-28–Pro-95. Positions Val-182–Lys-194 are enriched in polar residues. Composition is skewed to basic and acidic residues over residues Ser-226 to Val-245 and Lys-260 to Pro-274.

It is found in the cytoplasm. The protein localises to the cytoskeleton. It localises to the myofibril. Its subcellular location is the stress fiber. In terms of biological role, control of actomyosin interactions in smooth muscle and nonmuscle cells (could act as a bridge between myosin and actin filaments). Inhibits the actin-activated ATPase of myosin this inhibition is attenuated by calcium-calmodulin and is potentiated by tropomyosin. Interacts with actin, myosin, 2 molecules of tropomyosin and with calmodulin. This chain is Caldesmon, smooth muscle (CALD1), found in Meleagris gallopavo (Wild turkey).